The primary structure comprises 284 residues: Bifunctional protein FolD (284 aa).

Residues 165–167 (GRS), S190, and I231 each bind NADP(+).

The protein belongs to the tetrahydrofolate dehydrogenase/cyclohydrolase family. Homodimer.

The catalysed reaction is (6R)-5,10-methylene-5,6,7,8-tetrahydrofolate + NADP(+) = (6R)-5,10-methenyltetrahydrofolate + NADPH. The enzyme catalyses (6R)-5,10-methenyltetrahydrofolate + H2O = (6R)-10-formyltetrahydrofolate + H(+). The protein operates within one-carbon metabolism; tetrahydrofolate interconversion. Catalyzes the oxidation of 5,10-methylenetetrahydrofolate to 5,10-methenyltetrahydrofolate and then the hydrolysis of 5,10-methenyltetrahydrofolate to 10-formyltetrahydrofolate. In Streptococcus thermophilus (strain ATCC BAA-250 / LMG 18311), this protein is Bifunctional protein FolD.